Reading from the N-terminus, the 707-residue chain is U-box domain-containing protein 2 (707 aa).

A U-box domain is found at 239–313 (RVPSDFRCSL…ASWCETNNVY (75 aa)). 5 ARM repeats span residues 453 to 492 (TDNR…NLSI), 494 to 534 (DNNK…SLSV), 536 to 575 (EEYK…NLSI), 577 to 615 (HENK…NLAT), and 617 to 656 (REGK…QLCT).

It carries out the reaction S-ubiquitinyl-[E2 ubiquitin-conjugating enzyme]-L-cysteine + [acceptor protein]-L-lysine = [E2 ubiquitin-conjugating enzyme]-L-cysteine + N(6)-ubiquitinyl-[acceptor protein]-L-lysine.. Its pathway is protein modification; protein ubiquitination. In terms of biological role, functions as an E3 ubiquitin ligase. The protein is U-box domain-containing protein 2 (PUB2) of Arabidopsis thaliana (Mouse-ear cress).